A 471-amino-acid polypeptide reads, in one-letter code: Glutamate--tRNA ligase (471 aa).

Residues 9-19 (PSPTGYLHVGG) carry the 'HIGH' region motif. Positions 98, 100, 125, and 127 each coordinate Zn(2+). Positions 237 to 241 (KLSKR) match the 'KMSKS' region motif. Lysine 240 contacts ATP.

This sequence belongs to the class-I aminoacyl-tRNA synthetase family. Glutamate--tRNA ligase type 1 subfamily. As to quaternary structure, monomer. Zn(2+) serves as cofactor.

The protein resides in the cytoplasm. It catalyses the reaction tRNA(Glu) + L-glutamate + ATP = L-glutamyl-tRNA(Glu) + AMP + diphosphate. Catalyzes the attachment of glutamate to tRNA(Glu) in a two-step reaction: glutamate is first activated by ATP to form Glu-AMP and then transferred to the acceptor end of tRNA(Glu). The polypeptide is Glutamate--tRNA ligase (Salmonella arizonae (strain ATCC BAA-731 / CDC346-86 / RSK2980)).